We begin with the raw amino-acid sequence, 377 residues long: Stimulator of interferon genes protein 7 (377 aa).

Transmembrane regions (helical) follow at residues 30-50 (TAAI…FLAV), 57-77 (THFL…GELL), 106-126 (FTFD…LILC), and 141-161 (FAIL…LVGL).

The protein belongs to the STING family.

It is found in the membrane. Its function is as follows. Facilitator of innate immune signaling that acts as a sensor of second messenger signals produced by cyclic GMP-AMP synthase-like receptors (cGLRs) and promotes the production of type I interferon. Innate immune response is triggered in response to nucleotides from viruses and bacteria delivered to the cytoplasm. Acts by binding cyclic dinucleotides: recognizes and binds a large variety of 2'-3'- and 3'-3' linked cyclic dinucleotides (2'-3'-cGAMP, 3'-3'-cGAMP, 2',3'-cUAMP, 3',3'-cUAMP and/or 3',3'-c-di-GMP) second messengers produced by cGLRs in response to nucleotides in the cytosol, such as double-stranded RNA (dsRNA). Upon binding to cyclic dinucleotides, oligomerizes and promotes the recruitment and subsequent activation of the transcription factor IRF3 to induce expression of type I interferon. The protein is Stimulator of interferon genes protein 7 of Stylophora pistillata (Smooth cauliflower coral).